A 325-amino-acid chain; its full sequence is Ribosomal RNA small subunit methyltransferase C (325 aa).

The protein belongs to the methyltransferase superfamily. RsmC family. In terms of assembly, monomer.

It is found in the cytoplasm. It catalyses the reaction guanosine(1207) in 16S rRNA + S-adenosyl-L-methionine = N(2)-methylguanosine(1207) in 16S rRNA + S-adenosyl-L-homocysteine + H(+). Specifically methylates the guanine in position 1207 of 16S rRNA in the 30S particle. The protein is Ribosomal RNA small subunit methyltransferase C of Alcanivorax borkumensis (strain ATCC 700651 / DSM 11573 / NCIMB 13689 / SK2).